We begin with the raw amino-acid sequence, 436 residues long: Na(+)/H(+) antiporter NhaA 1 (436 aa).

The next 11 helical transmembrane spans lie at 35–55 (FGGG…NSPW), 80–100 (LATW…GLEL), 116–136 (ALPV…YVGV), 147–167 (GWAI…AVIG), 176–196 (AFLL…IAIF), 201–221 (FKLT…LLVQ), 226–246 (WWWA…ESGV), 283–303 (VSAG…SLRG), 313–333 (PIVV…IFGS), 354–374 (LLGV…IGEL), and 385–405 (VKAA…IVLI).

The protein belongs to the NhaA Na(+)/H(+) (TC 2.A.33) antiporter family.

Its subcellular location is the cell membrane. It catalyses the reaction Na(+)(in) + 2 H(+)(out) = Na(+)(out) + 2 H(+)(in). Its function is as follows. Na(+)/H(+) antiporter that extrudes sodium in exchange for external protons. The polypeptide is Na(+)/H(+) antiporter NhaA 1 (Salinispora tropica (strain ATCC BAA-916 / DSM 44818 / JCM 13857 / NBRC 105044 / CNB-440)).